The chain runs to 125 residues: UPF0102 protein Mpop_0474 (125 aa).

This sequence belongs to the UPF0102 family.

The protein is UPF0102 protein Mpop_0474 of Methylorubrum populi (strain ATCC BAA-705 / NCIMB 13946 / BJ001) (Methylobacterium populi).